Consider the following 1118-residue polypeptide: Carbamoyl phosphate synthase arginine-specific large chain (1118 aa).

Residues 23-420 (QLVEGVNSVL…AFQKALRQVD (398 aa)) are carboxyphosphate synthetic domain. Residues Arg150, Arg190, Gly196, Gly197, Lys227, Leu229, Glu234, Gly260, Val261, His262, Gln303, and Glu317 each contribute to the ATP site. The ATP-grasp 1 domain occupies 154-346 (ASALKDINIP…LAYTAAKIGL (193 aa)). Residues Gln303, Glu317, and Asn319 each coordinate Mg(2+). Mn(2+) contacts are provided by Gln303, Glu317, and Asn319. The tract at residues 421-573 (PSLLGFQGST…YTTYNATKND (153 aa)) is oligomerization domain. The carbamoyl phosphate synthetic domain stretch occupies residues 574–958 (VEFNENGMLV…SYWTAIQSTM (385 aa)). The region spanning 698–890 (SSILDSIDVD…FIEIAVKAFL (193 aa)) is the ATP-grasp 2 domain. Residues Arg734, Lys773, Ile775, Glu780, Gly805, Val806, His807, Ser808, Gln848, and Glu861 each coordinate ATP. Residues Gln848, Glu861, and Asn863 each coordinate Mg(2+). The Mn(2+) site is built by Gln848, Glu861, and Asn863. Residues 959–1102 (NFHVPLPPSG…KILESHDVIV (144 aa)) are allosteric domain. One can recognise an MGS-like domain in the interval 960–1118 (FHVPLPPSGI…WDEFIGFKAY (159 aa)).

Belongs to the CarB family. In terms of assembly, heterodimer composed of 2 chains; the small (or glutamine) chain promotes the hydrolysis of glutamine to ammonia, which is used by the large (or ammonia) chain to synthesize carbamoyl phosphate. Mg(2+) serves as cofactor. It depends on Mn(2+) as a cofactor.

The protein localises to the cytoplasm. The enzyme catalyses hydrogencarbonate + L-glutamine + 2 ATP + H2O = carbamoyl phosphate + L-glutamate + 2 ADP + phosphate + 2 H(+). It carries out the reaction hydrogencarbonate + NH4(+) + 2 ATP = carbamoyl phosphate + 2 ADP + phosphate + 2 H(+). It functions in the pathway amino-acid biosynthesis; L-arginine biosynthesis; carbamoyl phosphate from bicarbonate: step 1/1. Large subunit of the arginine-specific carbamoyl phosphate synthase (CPSase). CPSase catalyzes the formation of carbamoyl phosphate from the ammonia moiety of glutamine, hydrogencarbonate, and phosphate donated by ATP, constituting the first step of 2 biosynthetic pathways, one leading to arginine and/or urea and the other to pyrimidine nucleotides. The large subunit (synthetase) binds the substrates ammonia (free or transferred from glutamine from the small subunit), hydrogencarbonate and ATP and carries out an ATP-coupled ligase reaction, activating hydrogencarbonate by forming carboxy phosphate which reacts with ammonia to form carbamoyl phosphate. The polypeptide is Carbamoyl phosphate synthase arginine-specific large chain (CPA2) (Saccharomyces cerevisiae (strain ATCC 204508 / S288c) (Baker's yeast)).